We begin with the raw amino-acid sequence, 330 residues long: B-cell receptor CD22 (330 aa).

Residues 1–17 (MHLLGPWLLLLEYLAFS) form the signal peptide. In terms of domain architecture, Ig-like V-type spans 18-136 (DSSKWAFEHP…MERIHLNVSE (119 aa)). Topologically, residues 18-330 (DSSKWAFEHP…VFLQVQYAPE (313 aa)) are extracellular. 3 disulfides stabilise this stretch: cysteine 37-cysteine 165, cysteine 42-cysteine 100, and cysteine 159-cysteine 217. N-linked (GlcNAc...) asparagine glycans are attached at residues asparagine 65, asparagine 99, and asparagine 110. Residue arginine 118 participates in N-acetylneuraminate binding. N-linked (GlcNAc...) asparagine glycans are attached at residues asparagine 133, asparagine 162, asparagine 187, and asparagine 229. Ig-like C2-type domains lie at 141–233 (PHIQ…DTVQ) and 240–324 (PKLK…VFLQ). The cysteines at positions 263 and 307 are disulfide-linked.

This sequence belongs to the immunoglobulin superfamily. SIGLEC (sialic acid binding Ig-like lectin) family. As to quaternary structure, predominantly monomer of isoform CD22-beta. Also found as heterodimer of isoform CD22-beta and a shorter isoform. Interacts with PTPN6/SHP-1, LYN, SYK, PIK3R1/PIK3R2 and PLCG1 upon phosphorylation. Interacts with GRB2, INPP5D and SHC1 upon phosphorylation. May form a complex with INPP5D/SHIP, GRB2 and SHC1.

It localises to the cell membrane. Most highly expressed siglec (sialic acid-binding immunoglobulin-like lectin) on B-cells that plays a role in various aspects of B-cell biology including differentiation, antigen presentation, and trafficking to bone marrow. Binds to alpha 2,6-linked sialic acid residues of surface molecules such as CD22 itself, CD45 and IgM in a cis configuration. Can also bind to ligands on other cells as an adhesion molecule in a trans configuration. Acts as an inhibitory coreceptor on the surface of B-cells and inhibits B-cell receptor induced signaling, characterized by inhibition of the calcium mobilization and cellular activation. Mechanistically, the immunoreceptor tyrosine-based inhibitory motif domain is phosphorylated by the Src kinase LYN, which in turn leads to the recruitment of the protein tyrosine phosphatase 1/PTPN6, leading to the negative regulation of BCR signaling. If this negative signaling from is of sufficient strength, apoptosis of the B-cell can be induced. This Pongo pygmaeus (Bornean orangutan) protein is B-cell receptor CD22.